Consider the following 557-residue polypeptide: Arginine--tRNA ligase (557 aa).

The short motif at 132–142 is the 'HIGH' region element; the sequence is ANPTGNLHLGH.

The protein belongs to the class-I aminoacyl-tRNA synthetase family. In terms of assembly, monomer.

It is found in the cytoplasm. The enzyme catalyses tRNA(Arg) + L-arginine + ATP = L-arginyl-tRNA(Arg) + AMP + diphosphate. The protein is Arginine--tRNA ligase of Geobacillus thermodenitrificans (strain NG80-2).